The chain runs to 669 residues: Dymeclin (669 aa).

G2 is lipidated: N-myristoyl glycine.

It belongs to the dymeclin family. As to quaternary structure, interacts with GOLM1 and PPIB. In terms of processing, myristoylated in vitro; myristoylation is not essential for protein targeting to Golgi compartment.

It is found in the cytoplasm. The protein resides in the golgi apparatus. Its subcellular location is the membrane. Functionally, necessary for correct organization of Golgi apparatus. Involved in bone development. The chain is Dymeclin (Dym) from Mus musculus (Mouse).